Consider the following 584-residue polypeptide: 2-succinyl-5-enolpyruvyl-6-hydroxy-3-cyclohexene-1-carboxylate synthase (584 aa).

It belongs to the TPP enzyme family. MenD subfamily. As to quaternary structure, homodimer. The cofactor is Mg(2+). Requires Mn(2+) as cofactor. It depends on thiamine diphosphate as a cofactor.

The catalysed reaction is isochorismate + 2-oxoglutarate + H(+) = 5-enolpyruvoyl-6-hydroxy-2-succinyl-cyclohex-3-ene-1-carboxylate + CO2. It participates in quinol/quinone metabolism; 1,4-dihydroxy-2-naphthoate biosynthesis; 1,4-dihydroxy-2-naphthoate from chorismate: step 2/7. It functions in the pathway quinol/quinone metabolism; menaquinone biosynthesis. Functionally, catalyzes the thiamine diphosphate-dependent decarboxylation of 2-oxoglutarate and the subsequent addition of the resulting succinic semialdehyde-thiamine pyrophosphate anion to isochorismate to yield 2-succinyl-5-enolpyruvyl-6-hydroxy-3-cyclohexene-1-carboxylate (SEPHCHC). This is 2-succinyl-5-enolpyruvyl-6-hydroxy-3-cyclohexene-1-carboxylate synthase from Bacillus cereus (strain ATCC 10987 / NRS 248).